A 120-amino-acid polypeptide reads, in one-letter code: Large ribosomal subunit protein uL18 (120 aa).

Residues Met-1 to Gly-22 are disordered. The segment covering Ala-8–Ile-20 has biased composition (basic residues).

It belongs to the universal ribosomal protein uL18 family. As to quaternary structure, part of the 50S ribosomal subunit; part of the 5S rRNA/L5/L18/L25 subcomplex. Contacts the 5S and 23S rRNAs.

Its function is as follows. This is one of the proteins that bind and probably mediate the attachment of the 5S RNA into the large ribosomal subunit, where it forms part of the central protuberance. The chain is Large ribosomal subunit protein uL18 from Gloeobacter violaceus (strain ATCC 29082 / PCC 7421).